Here is a 189-residue protein sequence, read N- to C-terminus: Putative manganese efflux pump MntP (189 aa).

6 helical membrane passes run 3–23 (LSAT…ASIG), 41–61 (LIFG…GLFA), 65–85 (IMEW…CRMI), 104–124 (FWVL…IGVG), 132–152 (IVHT…LGML), and 167–187 (IIGG…HMHL).

It belongs to the MntP (TC 9.B.29) family.

Its subcellular location is the cell inner membrane. In terms of biological role, probably functions as a manganese efflux pump. In Yersinia pseudotuberculosis serotype O:1b (strain IP 31758), this protein is Putative manganese efflux pump MntP.